Consider the following 136-residue polypeptide: Small ribosomal subunit protein eS6 (136 aa).

This sequence belongs to the eukaryotic ribosomal protein eS6 family.

The sequence is that of Small ribosomal subunit protein eS6 from Methanosarcina acetivorans (strain ATCC 35395 / DSM 2834 / JCM 12185 / C2A).